The sequence spans 275 residues: 3-methyl-2-oxobutanoate hydroxymethyltransferase (275 aa).

Residues Asp-44 and Asp-83 each contribute to the Mg(2+) site. Residues 44–45 (DS), Asp-83, and Lys-113 each bind 3-methyl-2-oxobutanoate. Glu-115 serves as a coordination point for Mg(2+). Catalysis depends on Glu-182, which acts as the Proton acceptor.

This sequence belongs to the PanB family. In terms of assembly, homodecamer; pentamer of dimers. Mg(2+) is required as a cofactor.

The protein resides in the cytoplasm. It catalyses the reaction 3-methyl-2-oxobutanoate + (6R)-5,10-methylene-5,6,7,8-tetrahydrofolate + H2O = 2-dehydropantoate + (6S)-5,6,7,8-tetrahydrofolate. The protein operates within cofactor biosynthesis; (R)-pantothenate biosynthesis; (R)-pantoate from 3-methyl-2-oxobutanoate: step 1/2. Functionally, catalyzes the reversible reaction in which hydroxymethyl group from 5,10-methylenetetrahydrofolate is transferred onto alpha-ketoisovalerate to form ketopantoate. This chain is 3-methyl-2-oxobutanoate hydroxymethyltransferase, found in Clostridium novyi (strain NT).